Here is an 816-residue protein sequence, read N- to C-terminus: uncharacterized protein (816 aa).

4 disordered regions span residues 1 to 34, 65 to 101, 154 to 406, and 770 to 816; these read MLFN…QQES, RQNN…GYKN, DEKD…ENPE, and RQHK…VMYA. Residues 18-32 show a composition bias toward low complexity; it reads NQSSANTQNQQAHQQ. Polar residues predominate over residues 83-92; it reads VSATSAYSKQ. Positions 161–223 are enriched in low complexity; it reads TTTSSSTSTS…STSTTSTSTT (63 aa). Positions 246–260 are enriched in polar residues; it reads ESTSIGKGTADSAQI. Residue Ser286 is modified to Phosphoserine. Residues 292 to 316 show a composition bias toward basic and acidic residues; sequence DEQKEEKSDVKKVNPPSGEEKKEVE. The segment covering 317-326 has biased composition (acidic residues); it reads AEGDAEEETE. A compositionally biased stretch (low complexity) spans 327–342; the sequence is QSSAEESAERTSTPET. Phosphoserine is present on residues Ser343 and Ser347. Over residues 343 to 353 the composition is skewed to acidic residues; sequence SEPESEEDESP. The span at 380-396 shows a compositional bias: low complexity; that stretch reads KSPTSSSTQKSKTAAPS. Basic and acidic residues-rich tracts occupy residues 770 to 792 and 799 to 816; these read RQHK…DRSQ and PKDD…VMYA. Thr809 is modified (phosphothreonine).

Pyrophosphorylated by 5-diphosphoinositol pentakisphosphate (5-IP7). Serine pyrophosphorylation is achieved by Mg(2+)-dependent, but enzyme independent transfer of a beta-phosphate from a inositol pyrophosphate to a pre-phosphorylated serine residue.

This is an uncharacterized protein from Saccharomyces cerevisiae (strain ATCC 204508 / S288c) (Baker's yeast).